The following is a 337-amino-acid chain: Ketol-acid reductoisomerase (NADP(+)) (337 aa).

The KARI N-terminal Rossmann domain occupies 1 to 180 (MFYEKDADVD…GGGKSGIIET (180 aa)). Residues 22–25 (YGSQ), arginine 46, serine 49, serine 51, and 81–84 (DELQ) contribute to the NADP(+) site. The active site involves histidine 106. An NADP(+)-binding site is contributed by glycine 132. A KARI C-terminal knotted domain is found at 181-326 (TFKDECETDL…AELRAMMPWI (146 aa)). 4 residues coordinate Mg(2+): aspartate 189, glutamate 193, glutamate 225, and glutamate 229. Serine 250 contributes to the substrate binding site.

Belongs to the ketol-acid reductoisomerase family. The cofactor is Mg(2+).

The enzyme catalyses (2R)-2,3-dihydroxy-3-methylbutanoate + NADP(+) = (2S)-2-acetolactate + NADPH + H(+). It carries out the reaction (2R,3R)-2,3-dihydroxy-3-methylpentanoate + NADP(+) = (S)-2-ethyl-2-hydroxy-3-oxobutanoate + NADPH + H(+). It functions in the pathway amino-acid biosynthesis; L-isoleucine biosynthesis; L-isoleucine from 2-oxobutanoate: step 2/4. The protein operates within amino-acid biosynthesis; L-valine biosynthesis; L-valine from pyruvate: step 2/4. In terms of biological role, involved in the biosynthesis of branched-chain amino acids (BCAA). Catalyzes an alkyl-migration followed by a ketol-acid reduction of (S)-2-acetolactate (S2AL) to yield (R)-2,3-dihydroxy-isovalerate. In the isomerase reaction, S2AL is rearranged via a Mg-dependent methyl migration to produce 3-hydroxy-3-methyl-2-ketobutyrate (HMKB). In the reductase reaction, this 2-ketoacid undergoes a metal-dependent reduction by NADPH to yield (R)-2,3-dihydroxy-isovalerate. This chain is Ketol-acid reductoisomerase (NADP(+)), found in Pelagibacter ubique (strain HTCC1062).